A 77-amino-acid polypeptide reads, in one-letter code: Small ribosomal subunit protein bS16c (77 aa).

The protein belongs to the bacterial ribosomal protein bS16 family.

It localises to the plastid. The protein localises to the chloroplast. This Eucalyptus globulus subsp. globulus (Tasmanian blue gum) protein is Small ribosomal subunit protein bS16c.